We begin with the raw amino-acid sequence, 264 residues long: Endonuclease V (264 aa).

Mg(2+) contacts are provided by D72 and D137.

It belongs to the endonuclease V family. Mg(2+) serves as cofactor.

It is found in the cytoplasm. It catalyses the reaction Endonucleolytic cleavage at apurinic or apyrimidinic sites to products with a 5'-phosphate.. DNA repair enzyme involved in the repair of deaminated bases. Selectively cleaves double-stranded DNA at the second phosphodiester bond 3' to a deoxyinosine leaving behind the intact lesion on the nicked DNA. The sequence is that of Endonuclease V from Halobacterium salinarum (strain ATCC 700922 / JCM 11081 / NRC-1) (Halobacterium halobium).